The primary structure comprises 324 residues: Beta-ketoacyl-[acyl-carrier-protein] synthase III (324 aa).

Active-site residues include C112 and H249. An ACP-binding region spans residues 250–254; the sequence is QANRR. The active site involves N279.

This sequence belongs to the thiolase-like superfamily. FabH family. In terms of assembly, homodimer.

The protein localises to the cytoplasm. The catalysed reaction is malonyl-[ACP] + acetyl-CoA + H(+) = 3-oxobutanoyl-[ACP] + CO2 + CoA. Its pathway is lipid metabolism; fatty acid biosynthesis. Catalyzes the condensation reaction of fatty acid synthesis by the addition to an acyl acceptor of two carbons from malonyl-ACP. Catalyzes the first condensation reaction which initiates fatty acid synthesis and may therefore play a role in governing the total rate of fatty acid production. Possesses both acetoacetyl-ACP synthase and acetyl transacylase activities. Its substrate specificity determines the biosynthesis of branched-chain and/or straight-chain of fatty acids. This Streptococcus equi subsp. zooepidemicus (strain H70) protein is Beta-ketoacyl-[acyl-carrier-protein] synthase III.